The primary structure comprises 213 residues: MENDTGWSVKKCIDIFGEFLLVSIHCILYARRLYPQDLFIKARKYNTIVWQSRHPILCEYIEEVVQSCIEELQTGSVHQVALSIINKEQREEERYVFSTDSIPIIPDFLLEKQISTNEPFTDAYVEYMRASLIQLLNITNGLPLIEQECTWTLRVTLKDGFPRPKQWEEWFLPPQARETDATRQFKGITIPVRNVDIGPMMTEIWVEKYTNSD.

One can recognise an HORMA domain in the interval 10–206 (KKCIDIFGEF…IGPMMTEIWV (197 aa)).

The protein belongs to the MAD2 family. Forms DNA polymerase zeta with rev3.

It localises to the mitochondrion. The protein localises to the nucleus. Required for DNA damage induced mutagenesis. Involved in DNA repair, mitochondrial DNA repair and translesion synthesis. Has a role in the bypass of abasic (AP) sites. This chain is DNA polymerase zeta processivity subunit (rev7), found in Schizosaccharomyces pombe (strain 972 / ATCC 24843) (Fission yeast).